We begin with the raw amino-acid sequence, 478 residues long: Geranial dehydrogenase (478 aa).

Position 230–235 (230–235 (GSTSAG)) interacts with NAD(+). The Proton acceptor role is filled by glutamate 252. Catalysis depends on cysteine 286, which acts as the Nucleophile.

This sequence belongs to the aldehyde dehydrogenase family.

It carries out the reaction (2E)-geranial + NAD(+) + H2O = geranate + NADH + 2 H(+). The catalysed reaction is perillyl aldehyde + NAD(+) + H2O = perillate + NADH + 2 H(+). Its pathway is terpene metabolism; monoterpene degradation. Involved in the degradation of the monoterpenes beta-myrcene and limonene. During anaerobic degradation of beta-myrcene, catalyzes the NAD(+)-dependent oxidation of geranial to geranic acid. Seems to be specific for the trans-isomer geranial, since it does not act on the cis-isomer neral. During degradation of limonene, catalyzes the NAD(+)-dependent conversion of perillyl aldehyde to perrilic acid. The chain is Geranial dehydrogenase from Castellaniella defragrans (strain DSM 12143 / CCUG 39792 / 65Phen) (Alcaligenes defragrans).